The chain runs to 182 residues: MLDREGYRPNVGIILCNGRNEVFWGKRIREHSWQFPQGGIKRGETPEEAMFRELYEEVGLLPEHVRILGRTKGWLRYEVPTHWIKREWRGSYKGQKQIWFLLRLVGRDSDVNLRATNKPEFDAWRWNDYWVPLDAVIEFKRLVYEQALNELVRFLDFDRKGPRHKKEQEPFSDVVDSVRSEE.

A Nudix hydrolase domain is found at 6–149 (GYRPNVGIIL…KRLVYEQALN (144 aa)). The short motif at 38–59 (GGIKRGETPEEAMFRELYEEVG) is the Nudix box element. The interval 162-182 (PRHKKEQEPFSDVVDSVRSEE) is disordered.

It belongs to the Nudix hydrolase family. RppH subfamily. A divalent metal cation serves as cofactor.

Its function is as follows. Accelerates the degradation of transcripts by removing pyrophosphate from the 5'-end of triphosphorylated RNA, leading to a more labile monophosphorylated state that can stimulate subsequent ribonuclease cleavage. The protein is RNA pyrophosphohydrolase of Dechloromonas aromatica (strain RCB).